The primary structure comprises 142 residues: Relaxin-3 (142 aa).

The signal sequence occupies residues 1–25; that stretch reads MARYKLLLLLAVWVLTGELWPGAEA. 3 cysteine pairs are disulfide-bonded: Cys-35-Cys-129, Cys-47-Cys-142, and Cys-128-Cys-133. Residues 55 to 118 constitute a propeptide, connecting peptide; sequence SDILAHEAMG…GTPGALRGSR (64 aa).

The protein belongs to the insulin family. In terms of assembly, heterodimer of a B chain and an A chain linked by two disulfide bonds.

Its subcellular location is the secreted. Functionally, may play a role in neuropeptide signaling processes. Ligand for LGR7, RXFP3 and RXFP4. The polypeptide is Relaxin-3 (RLN3) (Pan troglodytes (Chimpanzee)).